Reading from the N-terminus, the 224-residue chain is MNGMWALLRLASPQLPIGGYSYSQGLELAIERGLVCDPPTARRWLEDQLLLNLARFEAPLLLAQCRAAADGDWTALEALAERHRASRETRELHLESRQMGFSLRQLLEDLPELDEPSRAVFARLVEPGLAPAWALAARAWGIAPEDALAAWLWSWLENQLAVLMKSLPLGQQAAQRLTSALLPALGQAQRTACAHAPDDWGTVAFGLTLASMAHERQYSRLFRS.

It belongs to the UreF family. UreD, UreF and UreG form a complex that acts as a GTP-hydrolysis-dependent molecular chaperone, activating the urease apoprotein by helping to assemble the nickel containing metallocenter of UreC. The UreE protein probably delivers the nickel.

It localises to the cytoplasm. In terms of biological role, required for maturation of urease via the functional incorporation of the urease nickel metallocenter. This Azotobacter vinelandii (strain DJ / ATCC BAA-1303) protein is Urease accessory protein UreF.